Here is a 412-residue protein sequence, read N- to C-terminus: MDGDIRKNSLDDGSMDALTGEQSIRNFNINFGPQHPAAHGLLRMVLELDGEIVERADPHIGLLHRGTEKLMESRTYLQNLPYLDRLDYVAPMNQEHAWCLAIERLTGTVIPRRASLIRVLYSEIGRILNHLMGVTTGAMDVGALTPPLWGFEAREELMIFYERACGARLHAAYFRPGGVHQDLPPDLLDDIEEWCERFPKLVDDLDTLLTENRIFKQRLVDIGIVTEADALDWGYTGVMVRGSGLAWDLRRSQPYECYDEFDFQIPVGRNGDCYDRYLCRMAEMRESCKIMQQAVQKLRAEPAGDVLARGKLTPPRRAEMKRDMESLIHHFKLYTEGFKVPAGEVYAAVEGPKGEFGVYLVADGTNKPWRAKLRAPGFAHLQSIDWMSRGHMLADVPAIIATLDIVFGEVDR.

It belongs to the complex I 49 kDa subunit family. NDH-1 is composed of at least 14 different subunits, Nqo1 to Nqo14. The complex has a L-shaped structure, with the hydrophobic arm (subunits Nqo7, Nqo8, Nqo10 to Nqo14) embedded in the inner membrane and the hydrophilic peripheral arm (subunits Nqo1 to Nqo6, Nqo9) protruding into the bacterial cytoplasm. The hydrophilic domain contains all the redox centers.

The protein resides in the cell inner membrane. The enzyme catalyses a quinone + NADH + 5 H(+)(in) = a quinol + NAD(+) + 4 H(+)(out). Its function is as follows. NDH-1 shuttles electrons from NADH, via FMN and iron-sulfur (Fe-S) centers, to quinones in the respiratory chain. The immediate electron acceptor for the enzyme in this species is believed to be ubiquinone. Couples the redox reaction to proton translocation (for every two electrons transferred, four hydrogen ions are translocated across the cytoplasmic membrane), and thus conserves the redox energy in a proton gradient. The polypeptide is NADH-quinone oxidoreductase subunit 4 (nqo4) (Paracoccus denitrificans).